A 703-amino-acid chain; its full sequence is MAVAVRTLQEQLEKAKESLKNVDENIRKLTGRDPNDVRPIQARLLALSGPGGGRGRGSLLLRRGFSDSGGGPPAKQRDLEGAVSRLGGERRTRRESRQESDPEDDDVKKPALQSSVVATSKERSTERPLFQDQNTDEKETPERPGPIFGLLMGTLQKFKQESTVATERQKRRQEIEQKLEVQAEEERKQVENERRELFEERRAKQTELRLLEQKVELAQLQEEWNEHNAKIIKYIRTKTKPHLFYIPGRMCPAPKLIEESQRKTNALFEGRRIEFAEQINKMEARPRRQSMKEKEHQVVVRNEEQKSEQEEGKVAPRTRVMLRALDDLVARVGTPSPRRGSGEEEEKEIPIVHSDAEKEQEEEEQKQEMEVKMEEETEVRESEKQQDSQPEEVMDVLEMVESVKNVIAEQEVMETNQVERVEPSENEASKELEPEMEFEIEPDKECKSLSPGKENASTLEMENEPEEKEEKESEPQPEPMAQPQAQSLPQPQPQRHRQSQSQPQQYSSPPPLSQPETLPLAVSQPPPQLIQRQGHLPPERKEFLVESVKLTEVPTEPVLTVHSESKYETKTRSRSRGRARNRTSKSRSRSSSSSSSSSSSTSSSSGSSSSSGSSSSRTSSSSSSTSGSSSRDSSSSTTSSSESRSRSRGRGHNRDRKHRRSVDRKRRDASGLERSHKSAKGGSSRDAKAVSSSGMPRFKPGQL.

Position 2 is an N-acetylalanine (alanine 2). The stretch at 2-32 (AVAVRTLQEQLEKAKESLKNVDENIRKLTGR) forms a coiled coil. Residues 46-148 (ALSGPGGGRG…ETPERPGPIF (103 aa)) form a disordered region. Serine 48 is modified (phosphoserine). Residue arginine 54 is modified to Omega-N-methylarginine. Residues serine 58, serine 66, serine 96, and serine 100 each carry the phosphoserine modification. Residues 87–100 (GGERRTRRESRQES) show a composition bias toward basic and acidic residues. A Glycyl lysine isopeptide (Lys-Gly) (interchain with G-Cter in SUMO2) cross-link involves residue lysine 109. Residues serine 114 and serine 115 each carry the phosphoserine modification. Residue lysine 121 forms a Glycyl lysine isopeptide (Lys-Gly) (interchain with G-Cter in SUMO2) linkage. A Phosphothreonine modification is found at threonine 125. Residues lysine 138 and lysine 157 each participate in a glycyl lysine isopeptide (Lys-Gly) (interchain with G-Cter in SUMO2) cross-link. A Glycyl lysine isopeptide (Lys-Gly) (interchain with G-Cter in SUMO1); alternate cross-link involves residue lysine 159. Lysine 159 participates in a covalent cross-link: Glycyl lysine isopeptide (Lys-Gly) (interchain with G-Cter in SUMO2); alternate. Residues 165–236 (ATERQKRRQE…HNAKIIKYIR (72 aa)) are a coiled coil. Positions 223–285 (EWNEHNAKII…AEQINKMEAR (63 aa)) are sufficient for PSAP complex assembly. A Glycyl lysine isopeptide (Lys-Gly) (interchain with G-Cter in SUMO2) cross-link involves residue lysine 230. Lysine 240 carries the post-translational modification N6-acetyllysine; alternate. At lysine 240 the chain carries N6-succinyllysine; alternate. Residues lysine 281, lysine 306, and lysine 313 each participate in a glycyl lysine isopeptide (Lys-Gly) (interchain with G-Cter in SUMO2) cross-link. 3 disordered regions span residues 284-314 (ARPR…EGKV), 331-394 (RVGT…EEVM), and 408-703 (AEQE…PGQL). Composition is skewed to basic and acidic residues over residues 348–357 (EIPIVHSDAE) and 366–386 (KQEM…EKQQ). Serine 354 carries the phosphoserine modification. A coiled-coil region spans residues 354–411 (SDAEKEQEEEEQKQEMEVKMEEETEVRESEKQQDSQPEEVMDVLEMVESVKNVIAEQE). Residues lysine 366 and lysine 372 each participate in a glycyl lysine isopeptide (Lys-Gly) (interchain with G-Cter in SUMO2) cross-link. 2 positions are modified to phosphoserine: serine 382 and serine 388. Residues 417–433 (QVERVEPSENEASKELE) show a composition bias toward basic and acidic residues. 2 positions are modified to phosphoserine: serine 450 and serine 457. Residues 479–489 (PMAQPQAQSLP) show a composition bias toward low complexity. Residues lysine 541 and lysine 549 each participate in a glycyl lysine isopeptide (Lys-Gly) (interchain with G-Cter in SUMO2) cross-link. The residue at position 565 (serine 565) is a Phosphoserine. Residue lysine 566 forms a Glycyl lysine isopeptide (Lys-Gly) (interchain with G-Cter in SUMO2) linkage. The segment covering 572–588 (RSRSRGRARNRTSKSRS) has biased composition (basic residues). Residues 589-642 (RSSSSSSSSSSSTSSSSGSSSSSGSSSSRTSSSSSSTSGSSSRDSSSSTTSSSE) show a composition bias toward low complexity. Residues 646–664 (RSRGRGHNRDRKHRRSVDR) show a composition bias toward basic residues. Basic and acidic residues predominate over residues 665–676 (KRRDASGLERSH). 2 positions are modified to phosphoserine: serine 670 and serine 691.

This sequence belongs to the pinin family. In terms of assembly, found in a mRNA splicing-dependent exon junction complex (EJC). Found in a complex with SR proteins. Found in a mRNP complex with RNPS1. Component of the PSAP complex consisting of RNPS1, SAP18 and PNN. Interacts with PNISR, CTBP1, CTBP2, KRT8, KRT18, KRT19, PS1D/PNO40, PPIG, RNPS1, SFRS4 and SRRM2. Identified in the spliceosome C complex.

It is found in the nucleus speckle. The protein localises to the cell junction. Its subcellular location is the desmosome. Transcriptional activator binding to the E-box 1 core sequence of the E-cadherin promoter gene; the core-binding sequence is 5'CAGGTG-3'. Capable of reversing CTBP1-mediated transcription repression. Auxiliary component of the splicing-dependent multiprotein exon junction complex (EJC) deposited at splice junction on mRNAs. The EJC is a dynamic structure consisting of core proteins and several peripheral nuclear and cytoplasmic associated factors that join the complex only transiently either during EJC assembly or during subsequent mRNA metabolism. Participates in the regulation of alternative pre-mRNA splicing. Associates to spliced mRNA within 60 nt upstream of the 5'-splice sites. Component of the PSAP complex which binds RNA in a sequence-independent manner and is proposed to be recruited to the EJC prior to or during the splicing process and to regulate specific excision of introns in specific transcription subsets. Involved in the establishment and maintenance of epithelia cell-cell adhesion. This Bos taurus (Bovine) protein is Pinin (PNN).